The following is a 495-amino-acid chain: Autoinducer 2 import ATP-binding protein LsrA (495 aa).

ABC transporter domains are found at residues 5 to 233 and 256 to 494; these read IEAH…TPVS and AQDF…FGGQ. Position 37–44 (37–44) interacts with ATP; that stretch reads GGNGAGKS.

Belongs to the ABC transporter superfamily. AI-2 autoinducer porter (TC 3.A.1.2.8) family. In terms of assembly, the complex is composed of two ATP-binding proteins (LsrA), two transmembrane proteins (LsrC and LsrD) and a solute-binding protein (LsrB).

The protein resides in the cell inner membrane. It carries out the reaction ATP + H2O + (2R,4S)-2-methyl-2,3,3,4-tetrahydroxytetrahydrofuran-[AI-2-binding protein]Side 1 = ADP + phosphate + (2R,4S)-2-methyl-2,3,3,4-tetrahydroxytetrahydrofuranSide 2 + [AI-2-binding protein]Side 1.. Part of the ABC transporter complex LsrABCD involved in autoinducer 2 (AI-2) import. Responsible for energy coupling to the transport system. The protein is Autoinducer 2 import ATP-binding protein LsrA (lsrA) of Enterobacter sp. (strain 638).